We begin with the raw amino-acid sequence, 207 residues long: Guanylate kinase (207 aa).

Residues 7-185 enclose the Guanylate kinase-like domain; that stretch reads GIVLVLCAPS…AYDELRAAYI (179 aa). ATP is bound at residue 14–21; it reads APSGTGKT.

It belongs to the guanylate kinase family.

The protein resides in the cytoplasm. It carries out the reaction GMP + ATP = GDP + ADP. Its function is as follows. Essential for recycling GMP and indirectly, cGMP. The protein is Guanylate kinase of Nitratidesulfovibrio vulgaris (strain ATCC 29579 / DSM 644 / CCUG 34227 / NCIMB 8303 / VKM B-1760 / Hildenborough) (Desulfovibrio vulgaris).